Reading from the N-terminus, the 363-residue chain is Chorismate synthase (363 aa).

The interval 42–61 (QRDLDRRKPGTSRHTTQRQE) is disordered. Residues Arg48 and Arg54 each contribute to the NADP(+) site. Residues 125–127 (RSS), 237–238 (NA), Gly277, 292–296 (KPTSS), and Arg318 each bind FMN.

This sequence belongs to the chorismate synthase family. Homotetramer. FMNH2 serves as cofactor.

The enzyme catalyses 5-O-(1-carboxyvinyl)-3-phosphoshikimate = chorismate + phosphate. The protein operates within metabolic intermediate biosynthesis; chorismate biosynthesis; chorismate from D-erythrose 4-phosphate and phosphoenolpyruvate: step 7/7. Functionally, catalyzes the anti-1,4-elimination of the C-3 phosphate and the C-6 proR hydrogen from 5-enolpyruvylshikimate-3-phosphate (EPSP) to yield chorismate, which is the branch point compound that serves as the starting substrate for the three terminal pathways of aromatic amino acid biosynthesis. This reaction introduces a second double bond into the aromatic ring system. The sequence is that of Chorismate synthase from Pseudomonas aeruginosa (strain LESB58).